We begin with the raw amino-acid sequence, 384 residues long: Succinyl-diaminopimelate desuccinylase (384 aa).

His-71 is a binding site for Zn(2+). Asp-73 is a catalytic residue. Asp-104 lines the Zn(2+) pocket. The active-site Proton acceptor is Glu-139. 3 residues coordinate Zn(2+): Glu-140, Glu-168, and His-357.

Belongs to the peptidase M20A family. DapE subfamily. As to quaternary structure, homodimer. The cofactor is Zn(2+). Requires Co(2+) as cofactor.

It catalyses the reaction N-succinyl-(2S,6S)-2,6-diaminopimelate + H2O = (2S,6S)-2,6-diaminopimelate + succinate. It participates in amino-acid biosynthesis; L-lysine biosynthesis via DAP pathway; LL-2,6-diaminopimelate from (S)-tetrahydrodipicolinate (succinylase route): step 3/3. Catalyzes the hydrolysis of N-succinyl-L,L-diaminopimelic acid (SDAP), forming succinate and LL-2,6-diaminopimelate (DAP), an intermediate involved in the bacterial biosynthesis of lysine and meso-diaminopimelic acid, an essential component of bacterial cell walls. In Bradyrhizobium sp. (strain ORS 278), this protein is Succinyl-diaminopimelate desuccinylase.